The chain runs to 429 residues: Phosphomethylpyrimidine synthase (429 aa).

Substrate is bound by residues Asn66, Met95, Tyr124, His163, 185–187 (SRG), 226–229 (DAMR), and Glu265. His269 is a Zn(2+) binding site. Position 292 (Tyr292) interacts with substrate. Residue His333 participates in Zn(2+) binding. Residues Cys409, Cys412, and Cys416 each contribute to the [4Fe-4S] cluster site.

It belongs to the ThiC family. [4Fe-4S] cluster is required as a cofactor.

The catalysed reaction is 5-amino-1-(5-phospho-beta-D-ribosyl)imidazole + S-adenosyl-L-methionine = 4-amino-2-methyl-5-(phosphooxymethyl)pyrimidine + CO + 5'-deoxyadenosine + formate + L-methionine + 3 H(+). It functions in the pathway cofactor biosynthesis; thiamine diphosphate biosynthesis. Catalyzes the synthesis of the hydroxymethylpyrimidine phosphate (HMP-P) moiety of thiamine from aminoimidazole ribotide (AIR) in a radical S-adenosyl-L-methionine (SAM)-dependent reaction. The sequence is that of Phosphomethylpyrimidine synthase from Methanopyrus kandleri (strain AV19 / DSM 6324 / JCM 9639 / NBRC 100938).